Reading from the N-terminus, the 361-residue chain is tRNA/tmRNA (uracil-C(5))-methyltransferase (361 aa).

The S-adenosyl-L-methionine site is built by Q185, Y213, N218, E234, and D294. The Nucleophile role is filled by C319. The Proton acceptor role is filled by E353.

This sequence belongs to the class I-like SAM-binding methyltransferase superfamily. RNA M5U methyltransferase family. TrmA subfamily.

It catalyses the reaction uridine(54) in tRNA + S-adenosyl-L-methionine = 5-methyluridine(54) in tRNA + S-adenosyl-L-homocysteine + H(+). The enzyme catalyses uridine(341) in tmRNA + S-adenosyl-L-methionine = 5-methyluridine(341) in tmRNA + S-adenosyl-L-homocysteine + H(+). Dual-specificity methyltransferase that catalyzes the formation of 5-methyluridine at position 54 (m5U54) in all tRNAs, and that of position 341 (m5U341) in tmRNA (transfer-mRNA). This Pseudomonas putida (strain ATCC 47054 / DSM 6125 / CFBP 8728 / NCIMB 11950 / KT2440) protein is tRNA/tmRNA (uracil-C(5))-methyltransferase.